The sequence spans 349 residues: Fructose-1,6-bisphosphatase class 1 (349 aa).

Residues Glu92, Asp113, Leu115, and Asp116 each contribute to the Mg(2+) site. Substrate is bound by residues 116-119, Asn209, Tyr242, and Lys272; that span reads DGSS. Position 278 (Glu278) interacts with Mg(2+).

It belongs to the FBPase class 1 family. As to quaternary structure, homotetramer. Mg(2+) is required as a cofactor.

It is found in the cytoplasm. The catalysed reaction is beta-D-fructose 1,6-bisphosphate + H2O = beta-D-fructose 6-phosphate + phosphate. Its pathway is carbohydrate biosynthesis; Calvin cycle. This is Fructose-1,6-bisphosphatase class 1 from Chloroherpeton thalassium (strain ATCC 35110 / GB-78).